The primary structure comprises 127 residues: uncharacterized protein (127 aa).

Over residues 1–17 the composition is skewed to polar residues; sequence MQGSVQIQKGNISSSYT. The segment at 1–36 is disordered; the sequence is MQGSVQIQKGNISSSYTPEKHPSHPTSANGSMSPKR.

This is an uncharacterized protein from Treponema pallidum (strain Nichols).